The primary structure comprises 94 residues: Sapecin (94 aa).

The signal sequence occupies residues 1–23 (MKSFIVLAVTLCLAAFFMGQSVA). The propeptide occupies 24–54 (SPAAAAEESKFVDGLHALKTIEPELHGRYKR). Disulfide bonds link Cys57/Cys84, Cys70/Cys90, and Cys74/Cys92.

The protein belongs to the invertebrate defensin family. Type 1 subfamily. Hemocytes and fat body.

It localises to the secreted. Sapecins, which are potent bactericidal proteins, are produced in response to injury. Sapecin is cytotoxic to Gram-positive bacteria, and to a lesser extent against Gram-negative bacteria. This Sarcophaga peregrina (Flesh fly) protein is Sapecin.